Consider the following 1342-residue polypeptide: MAYSYFEKKRIRKDFGKSVQVMEYPFLLSIQLDSFRKFIDTDPTGETGLEAAFRSIFPIKAYSGSSELQYVSYRLGEPLFDVKECQIRGVTYSAPLRVKLRLVVYDKEAAAGTVKDIKEQEVYMGEIPLMTDNGTFVINGTERVIVSQLHRSPGVFFDHDKGKTHSSGKVLYNARVIPYRGSWLDFEFDPKDNLFVRIDRRRKLPASIILRALEYSTEEILAMFYDTTDYTIKGDKLIMDLIPERLRGETAIFDISIKKGEVLVESGRRITARHIRALSKAKLEKLEVPADYIVGRVLSKAYIDKSTGEVIAEANAIITLELLAELSQAGHKVLSTLYMNEFDVGSYMSDTLRVDSSTNKLEALVEVYRMMRPGEPPTKDAAEGLFSNLFFASERYDLSTVGRMKFNRRVGNADDVGTGILSKEDIISVMKTLIGIRDGKGEVDDIDHLGNRRIRSVGEMAENQFRVGLVRVERAVRERLSLGDLDAIMPQDLINAKPISAAVKEFFGSSQLSQFMDQNNPLSEVTHKRRISALGPGGLTRERAGFEVRDVHPTHYGRVCPIETPEGPNIGLINSLSCYARTNDFGFLETPYRKVIDGLVTDEIDYLSAIEEGNFVIAQANAERNDSNKLVQDLVNCRHRNEFILKASAEVQYMDVSPQQIISVAASLIPFLEHDDANRALMGSNMQRQAVPTLRVDKPLVGTGMEKVVAVDSGVTAVAKRGGVVSYVDASRIVVKVNENEMHAGEAGIDIYNLTKYTRSNQNTCINQRPVCRMGEPVVRGDVLADGPSTDMGELALGQNMRIAFMPWNGYNFEDSMLLSERVAIEDRFTTIHIQELTCIARDTKLGSEEITADIPNVGESALSKLDEAGVVYIGAEVNGGDILVGKVTPKGETQLTPEEKLLRAIFGEKAADVKDSSLRVPNSVKGTIIDVQIFTRDGVEKDARAVEIEQMQLKEVKKDLGDELSILEDGIYARTKKLLLSAGLNESDLTSMSRDKWLTQNLADEGQQAELEQIAEQFDNIKEDFDKKFEVKRRKITQGDDLQPGVLKIVKVYLAVKRHIQPGDKMAGRHGNKGVISNVVPVEDMPYDQFGVPVDIVLNPLGVPSRMNIGQILETHLGMACRGIGEKINRMLEAQQEIHKLRNFIQEVYNVGESRQVVDVASFSDDEVLRLAGNLRAGLPIATPAFDGAAEKEIKELFVLADMPQSGQFVLTDGRTGREFERPVTVGYMYMLKLNHLVDDKMHARSTGSYSLVTQQPLGGKAQFGGQRFGEMEVWALEAYGAAYTLQEMLTVKSDDVNGRTKMYKNLVDGDHRMEPGIPESFNVLLKEIRSLGINIELDKD.

Belongs to the RNA polymerase beta chain family. As to quaternary structure, the RNAP catalytic core consists of 2 alpha, 1 beta, 1 beta' and 1 omega subunit. When a sigma factor is associated with the core the holoenzyme is formed, which can initiate transcription.

The enzyme catalyses RNA(n) + a ribonucleoside 5'-triphosphate = RNA(n+1) + diphosphate. In terms of biological role, DNA-dependent RNA polymerase catalyzes the transcription of DNA into RNA using the four ribonucleoside triphosphates as substrates. The polypeptide is DNA-directed RNA polymerase subunit beta (Colwellia psychrerythraea (strain 34H / ATCC BAA-681) (Vibrio psychroerythus)).